The chain runs to 824 residues: A-adding tRNA nucleotidyltransferase (824 aa).

2 CBS domains span residues 305–363 (MNTP…DEPI) and 367–423 (VNRD…LEKL). Residue 459–462 (GVVR) participates in ATP binding. The Mg(2+) site is built by aspartate 472 and aspartate 474. ATP-binding positions include 545-546 (RD), asparagine 550, 590-599 (DPVRILRALR), arginine 603, and arginine 632.

The protein belongs to the tRNA nucleotidyltransferase/poly(A) polymerase family. It depends on Mg(2+) as a cofactor.

It catalyses the reaction a tRNA with a 3' CC end + ATP = a tRNA with a 3' CCA end + diphosphate. Its function is as follows. tRNA nucleotidyltransferase involved in the synthesis of the tRNA CCA terminus. Adds the terminal adenosine residue to tRNA. Can incorporate CMP into tRNA ending with C74C75 (tRNACC), with very weak efficiency. The polypeptide is A-adding tRNA nucleotidyltransferase (Aquifex aeolicus (strain VF5)).